The chain runs to 636 residues: Threonine--tRNA ligase (636 aa).

Positions 1–63 (MNEINVTLPD…ADGARVEIIT (63 aa)) constitute a TGS domain. The segment at 243 to 534 (DHRKLGRELD…LIEHFAGNFP (292 aa)) is catalytic. 3 residues coordinate Zn(2+): Cys335, His386, and His511.

It belongs to the class-II aminoacyl-tRNA synthetase family. In terms of assembly, homodimer. Zn(2+) is required as a cofactor.

Its subcellular location is the cytoplasm. The catalysed reaction is tRNA(Thr) + L-threonine + ATP = L-threonyl-tRNA(Thr) + AMP + diphosphate + H(+). Functionally, catalyzes the attachment of threonine to tRNA(Thr) in a two-step reaction: L-threonine is first activated by ATP to form Thr-AMP and then transferred to the acceptor end of tRNA(Thr). Also edits incorrectly charged L-seryl-tRNA(Thr). This Citrifermentans bemidjiense (strain ATCC BAA-1014 / DSM 16622 / JCM 12645 / Bem) (Geobacter bemidjiensis) protein is Threonine--tRNA ligase.